Reading from the N-terminus, the 281-residue chain is NADPH-dependent 7-cyano-7-deazaguanine reductase (281 aa).

A substrate-binding site is contributed by 81–83 (VES). NADPH is bound at residue 83-84 (SK). The active-site Thioimide intermediate is the Cys188. Residue Asp195 is the Proton donor of the active site. Residue 227-228 (HE) coordinates substrate. Residue 256 to 257 (RG) coordinates NADPH. The disordered stretch occupies residues 261–281 (INPLRTSHPQGLPRNMRTARQ).

It belongs to the GTP cyclohydrolase I family. QueF type 2 subfamily. As to quaternary structure, homodimer.

The protein resides in the cytoplasm. It catalyses the reaction 7-aminomethyl-7-carbaguanine + 2 NADP(+) = 7-cyano-7-deazaguanine + 2 NADPH + 3 H(+). Its pathway is tRNA modification; tRNA-queuosine biosynthesis. Catalyzes the NADPH-dependent reduction of 7-cyano-7-deazaguanine (preQ0) to 7-aminomethyl-7-deazaguanine (preQ1). The chain is NADPH-dependent 7-cyano-7-deazaguanine reductase from Verminephrobacter eiseniae (strain EF01-2).